Consider the following 364-residue polypeptide: Probable G-protein coupled receptor AH9.4 (364 aa).

A topological domain (extracellular) is located at residue Met-1. A helical transmembrane segment spans residues 2–22 (AFLQSAYLVMVFTVPIAGVIL). Residues 23–48 (NTYVLRKLIRVARKSVVRFETTSGLP) are Cytoplasmic-facing. The helical transmembrane segment at 49 to 69 (LAAMSVGDSITLCALLMQAIF) threads the bilayer. At 70–89 (HITPKGEVPTVVLSSICKFG) the chain is on the extracellular side. Residues 90 to 110 (IFLIHSTSAFSVWCWFFLSVL) form a helical membrane-spanning segment. The Cytoplasmic segment spans residues 111-130 (RYIAVFHPFKYRTIWRQPRN). Residues 131 to 151 (ALKFLAGAVGMFQIYTLIFVT) traverse the membrane as a helical segment. Residues 152–177 (YRQEEKSCGEYDVFHESAFKHVHLLD) lie on the Extracellular side of the membrane. The helical transmembrane segment at 178 to 198 (IFLFYAIPSLLRITLDFLVLI) threads the bilayer. The Cytoplasmic segment spans residues 199-277 (HCYSPFSVEG…KKKTAMVMRS (79 aa)). The chain crosses the membrane as a helical span at residues 278-298 (ILISVLNLLLNLPSHIFRAWA). The Extracellular segment spans residues 299–315 (SYDESSLENEIVRTLEP). A helical membrane pass occupies residues 316 to 336 (IAQMMYFSQFACNAFYLATSI). The Cytoplasmic segment spans residues 337-364 (YETNGSPRNTVISSSNRHVSRCISDDEA).

Belongs to the G-protein coupled receptor 1 family.

Its subcellular location is the cell membrane. Its function is as follows. Not known. Putative receptor. This Caenorhabditis elegans protein is Probable G-protein coupled receptor AH9.4.